Here is a 411-residue protein sequence, read N- to C-terminus: Tyrosine--tRNA ligase (411 aa).

Tyrosine 34 provides a ligand contact to L-tyrosine. The 'HIGH' region motif lies at 39–48 (CTATSLHIGS). The L-tyrosine site is built by tyrosine 171 and glutamine 175. A 'KMSKS' region motif is present at residues 231-235 (KMGKT). ATP is bound at residue lysine 234. Residues 345–411 (ISAYNLFYNA…GKKRHILVKV (67 aa)) enclose the S4 RNA-binding domain.

It belongs to the class-I aminoacyl-tRNA synthetase family. TyrS type 1 subfamily. Homodimer.

The protein resides in the cytoplasm. The catalysed reaction is tRNA(Tyr) + L-tyrosine + ATP = L-tyrosyl-tRNA(Tyr) + AMP + diphosphate + H(+). Functionally, catalyzes the attachment of tyrosine to tRNA(Tyr) in a two-step reaction: tyrosine is first activated by ATP to form Tyr-AMP and then transferred to the acceptor end of tRNA(Tyr). The polypeptide is Tyrosine--tRNA ligase (Rickettsia prowazekii (strain Madrid E)).